The chain runs to 472 residues: Tryptophanase (472 aa).

At K270 the chain carries N6-(pyridoxal phosphate)lysine.

The protein belongs to the beta-eliminating lyase family. As to quaternary structure, homotetramer. Pyridoxal 5'-phosphate is required as a cofactor.

The enzyme catalyses L-tryptophan + H2O = indole + pyruvate + NH4(+). The protein operates within amino-acid degradation; L-tryptophan degradation via pyruvate pathway; indole and pyruvate from L-tryptophan: step 1/1. The sequence is that of Tryptophanase (tnaA) from Vibrio cholerae serotype O1 (strain ATCC 39315 / El Tor Inaba N16961).